A 550-amino-acid polypeptide reads, in one-letter code: Carnitine transporter (550 aa).

The next 12 membrane-spanning stretches (helical) occupy residues 15–35 (FLAV…AIYS), 53–73 (FTTP…GLAF), 92–112 (SWIF…WGFL), 137–157 (VAYS…LASI), 196–216 (MFLL…AVTF), 230–250 (FMTK…SSYV), 263–283 (VCLG…TQFI), 317–337 (WTVF…LFVT), 347–367 (EVIF…FGVF), 401–421 (LLPA…VFLA), 451–471 (LFWC…KAPL), and 477–497 (ATIV…YGLV).

This sequence belongs to the BCCT transporter (TC 2.A.15) family.

It localises to the cell inner membrane. Inhibited by the protonophore 3,3',4',5-tetrachlorosalicylanilide (TCS). Not activated by osmolarity. In terms of biological role, catalyzes the energy-dependent uptake of carnitine and is essential for growth on carnitine. Can also mediate the uptake of choline. Is probably a proton:substrate symporter. This is Carnitine transporter from Acinetobacter baumannii (strain ATCC 19606 / DSM 30007 / JCM 6841 / CCUG 19606 / CIP 70.34 / NBRC 109757 / NCIMB 12457 / NCTC 12156 / 81).